The following is a 107-amino-acid chain: Large ribosomal subunit protein uL24 (107 aa).

This sequence belongs to the universal ribosomal protein uL24 family. Part of the 50S ribosomal subunit.

Its function is as follows. One of two assembly initiator proteins, it binds directly to the 5'-end of the 23S rRNA, where it nucleates assembly of the 50S subunit. In terms of biological role, one of the proteins that surrounds the polypeptide exit tunnel on the outside of the subunit. The protein is Large ribosomal subunit protein uL24 of Streptomyces avermitilis (strain ATCC 31267 / DSM 46492 / JCM 5070 / NBRC 14893 / NCIMB 12804 / NRRL 8165 / MA-4680).